The chain runs to 124 residues: Small ribosomal subunit protein uS12 (124 aa).

The interval 1–22 (MATVNQLVRKPRQKPDAKSNVA) is disordered. Aspartate 89 carries the 3-methylthioaspartic acid modification.

This sequence belongs to the universal ribosomal protein uS12 family. Part of the 30S ribosomal subunit. Contacts proteins S8 and S17. May interact with IF1 in the 30S initiation complex.

In terms of biological role, with S4 and S5 plays an important role in translational accuracy. Functionally, interacts with and stabilizes bases of the 16S rRNA that are involved in tRNA selection in the A site and with the mRNA backbone. Located at the interface of the 30S and 50S subunits, it traverses the body of the 30S subunit contacting proteins on the other side and probably holding the rRNA structure together. The combined cluster of proteins S8, S12 and S17 appears to hold together the shoulder and platform of the 30S subunit. The chain is Small ribosomal subunit protein uS12 from Pseudoalteromonas atlantica (strain T6c / ATCC BAA-1087).